Here is a 208-residue protein sequence, read N- to C-terminus: Large ribosomal subunit protein bL25 (208 aa).

The segment covering 186–201 (PAGEKSAAAEEGAAAA) has biased composition (low complexity). Positions 186 to 208 (PAGEKSAAAEEGAAAAGEDKPAA) are disordered.

This sequence belongs to the bacterial ribosomal protein bL25 family. CTC subfamily. As to quaternary structure, part of the 50S ribosomal subunit; part of the 5S rRNA/L5/L18/L25 subcomplex. Contacts the 5S rRNA. Binds to the 5S rRNA independently of L5 and L18.

This is one of the proteins that binds to the 5S RNA in the ribosome where it forms part of the central protuberance. The chain is Large ribosomal subunit protein bL25 from Ralstonia pickettii (strain 12J).